The chain runs to 260 residues: Crotonyl-CoA hydratase (260 aa).

Glu114 acts as the Nucleophile in catalysis. Catalysis depends on Glu134, which acts as the Proton acceptor.

Belongs to the enoyl-CoA hydratase/isomerase family. In terms of assembly, homotetramer.

The protein resides in the cytoplasm. The enzyme catalyses 3-hydroxybutanoyl-CoA = (2E)-butenoyl-CoA + H2O. It catalyses the reaction a short-chain (3S)-3-hydroxyacyl-CoA = a short-chain (2E)-enoyl-CoA + H2O. The protein operates within lipid metabolism; butanoate metabolism. Its function is as follows. Involved in syntrophic growth of S.wolfei with butyrate, as part of the butyrate oxidation pathway. Probably catalyzes the hydration of crotonyl-CoA to 3-hydroxybutyryl-CoA. The sequence is that of Crotonyl-CoA hydratase from Syntrophomonas wolfei subsp. wolfei (strain DSM 2245B / Goettingen).